Here is a 274-residue protein sequence, read N- to C-terminus: Putative HTH-type transcriptional regulator RmpR (274 aa).

Residues 18–88 form the HTH gntR-type domain; the sequence is IERADAIVER…RSGGTFVVNQ (71 aa). The segment at residues 46–65 is a DNA-binding region (H-T-H motif); that stretch reads EAALSEMFGVGGATLREALS. Residues 250–265 show a composition bias toward polar residues; it reads SRPSSPATAPDGSSSA. Positions 250–274 are disordered; it reads SRPSSPATAPDGSSSAEAAMIQEGQ.

Its function is as follows. May regulate the transcription of the rmpAB operon. The chain is Putative HTH-type transcriptional regulator RmpR (rmpR) from Mycobacterium gastri.